The chain runs to 514 residues: 2-isopropylmalate synthase (514 aa).

Residues 5–268 (LIIFDTTLRD…DVGLDTTQIV (264 aa)) enclose the Pyruvate carboxyltransferase domain. Asp14, His202, His204, and Asn239 together coordinate Mn(2+). Residues 395–514 (KFVSLSQRSE…KDDKLNPQRS (120 aa)) form a regulatory domain region.

This sequence belongs to the alpha-IPM synthase/homocitrate synthase family. LeuA type 1 subfamily. Homodimer. Requires Mn(2+) as cofactor.

The protein localises to the cytoplasm. The catalysed reaction is 3-methyl-2-oxobutanoate + acetyl-CoA + H2O = (2S)-2-isopropylmalate + CoA + H(+). It functions in the pathway amino-acid biosynthesis; L-leucine biosynthesis; L-leucine from 3-methyl-2-oxobutanoate: step 1/4. Catalyzes the condensation of the acetyl group of acetyl-CoA with 3-methyl-2-oxobutanoate (2-ketoisovalerate) to form 3-carboxy-3-hydroxy-4-methylpentanoate (2-isopropylmalate). This chain is 2-isopropylmalate synthase, found in Burkholderia ambifaria (strain MC40-6).